Consider the following 519-residue polypeptide: Apolipoprotein N-acyltransferase (519 aa).

6 consecutive transmembrane segments (helical) span residues 6–26, 47–67, 83–103, 126–146, 174–194, and 206–226; these read APLGWTYVAWFGQIPLWIWIF, LTAIAWGGGFYGVALFWITGV, IAAFCWLAITAWGVVLVFVWL, LFILWGTASWCGLETLWSHSI, LLSAFIVAVNGFLALGLIDFL, and WHYFLIAILIWLFCQGGGWLL. Residues 244 to 482 form the CN hydrolase domain; sequence IQGNIPNQIK…YEIHAAPIYR (239 aa). Catalysis depends on glutamate 285, which acts as the Proton acceptor. Lysine 343 is an active-site residue. The active-site Nucleophile is cysteine 394. The helical transmembrane segment at 496–516 threads the bilayer; the sequence is VVFLLLVVSAIAWLYQIVFPL.

This sequence belongs to the CN hydrolase family. Apolipoprotein N-acyltransferase subfamily.

It is found in the cell inner membrane. The catalysed reaction is N-terminal S-1,2-diacyl-sn-glyceryl-L-cysteinyl-[lipoprotein] + a glycerophospholipid = N-acyl-S-1,2-diacyl-sn-glyceryl-L-cysteinyl-[lipoprotein] + a 2-acyl-sn-glycero-3-phospholipid + H(+). The protein operates within protein modification; lipoprotein biosynthesis (N-acyl transfer). Functionally, catalyzes the phospholipid dependent N-acylation of the N-terminal cysteine of apolipoprotein, the last step in lipoprotein maturation. This is Apolipoprotein N-acyltransferase from Synechocystis sp. (strain ATCC 27184 / PCC 6803 / Kazusa).